We begin with the raw amino-acid sequence, 164 residues long: Putative 4-hydroxy-4-methyl-2-oxoglutarate aldolase (164 aa).

Residues 79–82 (GDRL) and arginine 101 contribute to the substrate site. Residue aspartate 102 coordinates a divalent metal cation.

This sequence belongs to the class II aldolase/RraA-like family. As to quaternary structure, homotrimer. The cofactor is a divalent metal cation.

It catalyses the reaction 4-hydroxy-4-methyl-2-oxoglutarate = 2 pyruvate. The enzyme catalyses oxaloacetate + H(+) = pyruvate + CO2. Functionally, catalyzes the aldol cleavage of 4-hydroxy-4-methyl-2-oxoglutarate (HMG) into 2 molecules of pyruvate. Also contains a secondary oxaloacetate (OAA) decarboxylase activity due to the common pyruvate enolate transition state formed following C-C bond cleavage in the retro-aldol and decarboxylation reactions. In Halorhodospira halophila (strain DSM 244 / SL1) (Ectothiorhodospira halophila (strain DSM 244 / SL1)), this protein is Putative 4-hydroxy-4-methyl-2-oxoglutarate aldolase.